Reading from the N-terminus, the 28-residue chain is uncharacterized protein (28 aa).

This is an uncharacterized protein from Saccharomyces cerevisiae (strain ATCC 204508 / S288c) (Baker's yeast).